Reading from the N-terminus, the 124-residue chain is MILNMLKGKIHRATVTQADLNYMGSITIDKTLIDAAGILENEKVQIVDNNNGARLETYVIPGKRDSGIICLNGAAARLVQPGDEIIIIAYAQIIESEAKTYKPKVVFVNDDNTIKEITNYEFNE.

S25 (schiff-base intermediate with substrate; via pyruvic acid) is an active-site residue. At S25 the chain carries Pyruvic acid (Ser). Position 57 (T57) interacts with substrate. Y58 acts as the Proton donor in catalysis. Residue 73 to 75 (GAA) participates in substrate binding.

Belongs to the PanD family. Heterooctamer of four alpha and four beta subunits. Pyruvate is required as a cofactor. Is synthesized initially as an inactive proenzyme, which is activated by self-cleavage at a specific serine bond to produce a beta-subunit with a hydroxyl group at its C-terminus and an alpha-subunit with a pyruvoyl group at its N-terminus.

It localises to the cytoplasm. The enzyme catalyses L-aspartate + H(+) = beta-alanine + CO2. Its pathway is cofactor biosynthesis; (R)-pantothenate biosynthesis; beta-alanine from L-aspartate: step 1/1. Functionally, catalyzes the pyruvoyl-dependent decarboxylation of aspartate to produce beta-alanine. This is Aspartate 1-decarboxylase from Clostridium botulinum (strain Alaska E43 / Type E3).